We begin with the raw amino-acid sequence, 2513 residues long: Highly reducing polyketide synthase ACRTS2 (2513 aa).

In terms of domain architecture, Ketosynthase family 3 (KS3) spans 4-429; it reads DTPVAIIGVS…GSSSAVIIDR (426 aa). Active-site for beta-ketoacyl synthase activity residues include cysteine 174, histidine 313, and histidine 353. The malonyl-CoA:ACP transacylase (MAT) domain stretch occupies residues 547-875; sequence VFTGQGAQYA…NYLPSLLRGT (329 aa). Serine 635 acts as the For malonyltransferase activity in catalysis. The interval 942–1074 is N-terminal hotdog fold; it reads HALIGRKAPS…GKIEPEIADL (133 aa). The dehydratase (DH) domain stretch occupies residues 942-1253; sequence HALIGRKAPS…TFRTVSSADD (312 aa). The PKS/mFAS DH domain occupies 942-1254; sequence HALIGRKAPS…FRTVSSADDQ (313 aa). Histidine 974 (proton acceptor; for dehydratase activity) is an active-site residue. The tract at residues 1092-1254 is C-terminal hotdog fold; the sequence is AGVIEHDMDN…FRTVSSADDQ (163 aa). The active-site Proton donor; for dehydratase activity is aspartate 1161. A methyltransferase (CMet) domain region spans residues 1407–1600; the sequence is SKIIGYLTEN…IPTNYRTDNP (194 aa). The tract at residues 1816 to 2127 is enoylreductase (ER) domain; the sequence is GSPDTIYFRR…SRDHIGRLVV (312 aa). The tract at residues 2152–2327 is ketoreductase (KR) domain; it reads ATYLVAGGTR…YTVSIGLPVV (176 aa). Positions 2433–2510 constitute a Carrier domain; the sequence is DPLTGLIEAL…ALAVNILAQR (78 aa). Residue serine 2470 is modified to O-(pantetheine 4'-phosphoryl)serine.

The protein operates within mycotoxin biosynthesis. Highly reducing polyketide synthase; part of the gene cluster that mediates the biosynthesis of the host-selective toxins (HSTs) ACR-toxins responsible for brown spot of rough lemon disease by the rough lemon pathotype. ACR-toxins cause uncoupling of mitochondrial oxidative-phosphorylation similar to that of classic protonophore. The structure of the major form of ACR-toxin (ACR-toxin I) consists of an alpha-dihydropyrone ring in a 19-carbon polyalcohol, a typical polyketide structure. Minor toxins were characterized as having a pyrone ring with polyalcohol side chains different in length and showing weaker toxicity. The highly reducing polyketide synthase ACRTS2 has all necessary enzymatic domains for multiple cycles of condensation and beta-keto processing. The cytochrome P450 monooxygenase ACRTS1 has also been shown to be essential for ACR-toxin biosynthesis, however its exact role in the pathway has not been elucidated yet. This is Highly reducing polyketide synthase ACRTS2 from Alternaria alternata (Alternaria rot fungus).